Consider the following 483-residue polypeptide: Septin-8 (483 aa).

Residues 1–16 (MAATDLERFSNAEPEP) show a composition bias toward basic and acidic residues. Residues 1–22 (MAATDLERFSNAEPEPRSLSLG) are disordered. An N-acetylalanine modification is found at Ala2. Ser10 carries the post-translational modification Phosphoserine. Residues 41–307 (QGFSFNILCV…ELYRRCKLEE (267 aa)) enclose the Septin-type G domain. Positions 51–58 (GETGIGKS) are G1 motif. GTP-binding positions include 51–58 (GETGIGKS), Gly106, 187–195 (KADTISKSE), Gly241, and Arg256. The G3 motif stretch occupies residues 103–106 (DAVG). The interval 186-189 (AKAD) is G4 motif. A coiled-coil region spans residues 320–413 (FSLQETYEAK…AVEALQSQAL (94 aa)). The span at 411–420 (QALHATSQQP) shows a compositional bias: polar residues. The disordered stretch occupies residues 411 to 443 (QALHATSQQPLRKDKDKKNRSDIGAHQPGMSLS). A compositionally biased stretch (basic and acidic residues) spans 421–433 (LRKDKDKKNRSDI).

Belongs to the TRAFAC class TrmE-Era-EngA-EngB-Septin-like GTPase superfamily. Septin GTPase family. Septins polymerize into heterooligomeric protein complexes that form filaments, and can associate with cellular membranes, actin filaments and microtubules. GTPase activity is required for filament formation. Interacts with CDK14. Interacts with SEPTIN5. Interacts with SEPTIN7. Interacts with SEPTIN4. Interacts with VAMP2; the interaction inhibits interaction of VAMP2 with SYP. Interacts with STX1A. In terms of tissue distribution, widely expressed, including in brain, heart and platelets; most abundant in aorta. Isoform 2 is expressed at low levels in specific brain areas, such as occipital pole, frontal lobe, temporal lobe and putamen. Isoform 1 and 3 are highly expressed in specific brain areas, such as occipital pole, frontal lobe, temporal lobe and putamen. Isoform 2 is highly expressed in prostate, testis and ovary. Isoform 1 and isoform 3 are expressed at low levels in prostate, testis and ovary.

It is found in the cytoplasm. The protein localises to the cytoskeleton. The protein resides in the synapse. It localises to the cell projection. Its subcellular location is the axon. It is found in the cytoplasmic vesicle. The protein localises to the secretory vesicle. The protein resides in the synaptic vesicle membrane. It localises to the presynapse. Filament-forming cytoskeletal GTPase. May play a role in platelet secretion. Seems to participate in the process of SNARE complex formation in synaptic vesicles. Functionally, stabilizes BACE1 protein levels and promotes the sorting and accumulation of BACE1 to the recycling or endosomal compartments, modulating the beta-amyloidogenic processing of APP. The chain is Septin-8 from Homo sapiens (Human).